The primary structure comprises 122 residues: Phospholipase A2 crotoxin basic subunit CBd (122 aa).

Intrachain disulfides connect Cys26–Cys115, Cys28–Cys44, Cys43–Cys95, Cys49–Cys122, Cys50–Cys88, Cys57–Cys81, and Cys75–Cys86. Tyr27, Gly29, and Gly31 together coordinate Ca(2+). His47 is a catalytic residue. Position 48 (Asp48) interacts with Ca(2+). Residue Asp89 is part of the active site.

Belongs to the phospholipase A2 family. Group II subfamily. D49 sub-subfamily. As to quaternary structure, heterodimer of one of the acidic (CA1, CA2, CA3 or CA4) and one of the basic (CBa1, CBa2, CBb, CBc or CBd) subunits; non-covalently linked. The acidic subunit is non-toxic, without enzymatic activity and comprises 3 peptides that are cross-linked by 5 disulfide bridges. The basic subunit is toxic, has phospholipase A2 activity and is composed of a single chain. Multiple variants of each subunit give different crotoxin complexes that can be subdivided into 2 classes: (1) those of high toxicity, low PLA2 activity (CBb, CBc and CBd linked with high affinity to any CA) and high stability (K(d)=4.5 nM) and (2) those of moderate toxicity, high PLA2 activity (CBa2 linked with low affinity to any CA) and low stability (K(d)=25 nM). Interacts with crotoxin inhibitor from Crotalus serum (CICS); the interaction leads to dissociation of the CA-CB heterodimer and to inhibition of PLA2 activity of the CB subunit. Interacts with human NBD1 domain of CFTR. Requires Ca(2+) as cofactor. In terms of tissue distribution, expressed by the venom gland.

It localises to the secreted. The enzyme catalyses a 1,2-diacyl-sn-glycero-3-phosphocholine + H2O = a 1-acyl-sn-glycero-3-phosphocholine + a fatty acid + H(+). Its function is as follows. Heterodimer CA-CB: Crotoxin is a potent presynaptic neurotoxin that possesses phospholipase A2 (PLA2) activity and exerts a lethal action by blocking neuromuscular transmission. It consists of a non-covalent association of a basic and weakly toxic PLA2 subunit (CBa2, CBb, CBc, or CBd), with a small acidic, non-enzymatic and non-toxic subunit (CA1, CA2, CA3 or CA4). The complex acts by binding to a specific 48-kDa protein (R48) receptor located on presynaptic membranes, forming a transient ternary complex CA-CB-R48, followed by dissociation of the CA-CB complex and release of the CA subunit. At equilibrium, only the CB subunits remain associated with the specific crotoxin receptor. In addition to neurotoxicity, crotoxin has been found to exert myotoxicity, nephrotoxicity, and cardiovascular toxicity. Moreover, anti-inflammatory, immunomodulatory, anti-tumor and analgesic effects of crotoxin have also been reported. Functionally, monomer CBd: The basic subunit of crotoxin is a snake venom phospholipase A2 (PLA2) that exhibits weak neurotoxicity (10-fold less than the heterodimer) and very strong anticoagulant effects by binding to factor Xa (F10) and inhibiting the prothrombinase activity. In addition, it shows the same effects described for the heterodimer and binds the nucleotide-binding domain (NBD1) of CFTR chloride channels and increases the channel current. PLA2 catalyzes the calcium-dependent hydrolysis of the 2-acyl groups in 3-sn-phosphoglycerides. This Crotalus durissus terrificus (South American rattlesnake) protein is Phospholipase A2 crotoxin basic subunit CBd.